A 342-amino-acid polypeptide reads, in one-letter code: Autoinducer 2 import system permease protein LsrC (342 aa).

Topologically, residues 1–13 (MLKFIQNNREITA) are periplasmic. A helical membrane pass occupies residues 14-34 (LLAVLLLFVLPGFLDRQYLSV). At 35-38 (QTLT) the chain is on the cytoplasmic side. A helical membrane pass occupies residues 39–59 (MVYSSAQILILLAMGATLVML). The Periplasmic portion of the chain corresponds to 60–69 (TRNIDVSVGS). The helical transmembrane segment at 70–90 (ITGMCAVLLGMLLNAGYSLPV) threads the bilayer. The Cytoplasmic segment spans residues 91–92 (AC). A helical membrane pass occupies residues 93–113 (VATLLLGLLAGFFNGVLVAWL). Position 114 (lysine 114) is a topological domain, periplasmic. Residues 115-135 (IPAIVATLGTLGLYRGIMLLW) form a helical membrane-spanning segment. Residues 136-154 (TGGKWIEGLPAELKQLSAP) lie on the Cytoplasmic side of the membrane. Residues 155–175 (LLLGVSAIGWLTIILVAFMAW) traverse the membrane as a helical segment. At 176 to 212 (LLAKTAFGRSFYATGDNLQGARQLGVRTEAIRIVAFS) the chain is on the periplasmic side. The chain crosses the membrane as a helical span at residues 213–233 (LNGCMAALAGIVFASQIGFIP). At 234-251 (NQTGTGLEMKAIAACVLG) the chain is on the cytoplasmic side. Residues 252–272 (GISLLGGSGAIIGAVLGAWFL) form a helical membrane-spanning segment. The Periplasmic segment spans residues 273–283 (TQIDSVLVLLR). The chain crosses the membrane as a helical span at residues 284-304 (IPAWWNDFIAGLVLLAVLVFD). At 305–342 (GRLRCALELNLRRQKYARFMTPPPSVKPASSGKKREAA) the chain is on the cytoplasmic side.

The protein belongs to the binding-protein-dependent transport system permease family. AraH/RbsC subfamily. In terms of assembly, the complex is composed of two ATP-binding proteins (LsrA), two transmembrane proteins (LsrC and LsrD) and a solute-binding protein (LsrB).

It localises to the cell inner membrane. Functionally, part of the ABC transporter complex LsrABCD involved in autoinducer 2 (AI-2) import. Probably responsible for the translocation of the substrate across the membrane. The sequence is that of Autoinducer 2 import system permease protein LsrC (lsrC) from Escherichia coli O157:H7.